A 544-amino-acid chain; its full sequence is Terpene synthase 9 (544 aa).

Residues aspartate 296, aspartate 300, and glutamate 449 each coordinate Mg(2+). The DDXXD motif signature appears at 296-300; the sequence is DDTFD.

Belongs to the terpene synthase family. Tpsa subfamily. Mg(2+) serves as cofactor. It depends on Mn(2+) as a cofactor.

The catalysed reaction is (2E,6E)-farnesyl diphosphate = (1E,4E)-germacrene B + diphosphate. The enzyme catalyses (2E)-geranyl diphosphate = terpinolene + diphosphate. It carries out the reaction (2E)-geranyl diphosphate = limonene + diphosphate. It catalyses the reaction (2E)-geranyl diphosphate = beta-myrcene + diphosphate. The catalysed reaction is (2Z,6Z)-farnesyl diphosphate = germacrene A + diphosphate. The enzyme catalyses (2Z,6Z)-farnesyl diphosphate = alpha-humulene + diphosphate. Its pathway is secondary metabolite biosynthesis; terpenoid biosynthesis. Its function is as follows. Sesquiterpene synthase involved in the biosynthesis of volatile compounds. Mediates the conversion of (2E,6E)-farnesyl diphosphate (FPP) into (1E,4E)-germacrene B, but also smaller amounts of germacrene A and C, and of (2Z,6Z)-farnesyl diphosphate ((ZZ)-FPP) into alpha-humulene, germacrene A and germacrene B. Can act with a low efficiency as a monoterpene synthase with geranyl diphosphate (GPP) as substrate, thus producing beta-myrcene, limonene and terpinolene. The chain is Terpene synthase 9 from Solanum habrochaites (Wild tomato).